The primary structure comprises 288 residues: Acetyl-coenzyme A carboxylase carboxyl transferase subunit beta (288 aa).

The CoA carboxyltransferase N-terminal domain maps to 24–288 (LWVKCPESGE…TRTPRASEAA (265 aa)).

It belongs to the AccD/PCCB family. In terms of assembly, acetyl-CoA carboxylase is a heterohexamer composed of biotin carboxyl carrier protein (AccB), biotin carboxylase (AccC) and two subunits each of ACCase subunit alpha (AccA) and ACCase subunit beta (AccD).

Its subcellular location is the cytoplasm. It carries out the reaction N(6)-carboxybiotinyl-L-lysyl-[protein] + acetyl-CoA = N(6)-biotinyl-L-lysyl-[protein] + malonyl-CoA. Its pathway is lipid metabolism; malonyl-CoA biosynthesis; malonyl-CoA from acetyl-CoA: step 1/1. Its function is as follows. Component of the acetyl coenzyme A carboxylase (ACC) complex. Biotin carboxylase (BC) catalyzes the carboxylation of biotin on its carrier protein (BCCP) and then the CO(2) group is transferred by the transcarboxylase to acetyl-CoA to form malonyl-CoA. The protein is Acetyl-coenzyme A carboxylase carboxyl transferase subunit beta of Methylocella silvestris (strain DSM 15510 / CIP 108128 / LMG 27833 / NCIMB 13906 / BL2).